Reading from the N-terminus, the 335-residue chain is Fructose-1,6-bisphosphatase class 1 (335 aa).

Residues E92, D114, L116, and D117 each coordinate Mg(2+). Substrate-binding positions include 117-120 (DGSS), N209, and K275. E281 lines the Mg(2+) pocket.

The protein belongs to the FBPase class 1 family. In terms of assembly, homotetramer. The cofactor is Mg(2+).

It is found in the cytoplasm. It catalyses the reaction beta-D-fructose 1,6-bisphosphate + H2O = beta-D-fructose 6-phosphate + phosphate. It participates in carbohydrate biosynthesis; gluconeogenesis. This chain is Fructose-1,6-bisphosphatase class 1, found in Verminephrobacter eiseniae (strain EF01-2).